Consider the following 488-residue polypeptide: BTB/POZ domain-containing protein 1 (488 aa).

The span at 1-19 (MASLGSAAAGEPATGAEAE) shows a compositional bias: low complexity. Positions 1 to 42 (MASLGSAAAGEPATGAEAEPGPPAPPPPPPPPPAPSPSALGP) are disordered. Positions 20–36 (PGPPAPPPPPPPPPAPS) are enriched in pro residues. A BTB domain is found at 75-151 (SDVRFVLGKG…LYSDEVQIGP (77 aa)). R85 bears the Omega-N-methylarginine mark. Residues 190–290 (LTQARLFDEP…IRFPLMTIEE (101 aa)) enclose the BACK domain.

As to quaternary structure, interacts (via C-terminus) with TOP1. Interacts with TRIM5 isoform Delta. Interacts with CUL3. Strongly expressed in heart and skeletal muscle. Weakly expressed in myoblast C2C12 cells, but strongly up-regulated upon their differentiation into myotubes.

The protein resides in the cytoplasm. It functions in the pathway protein modification; protein ubiquitination. In terms of biological role, probable substrate-specific adapter of an E3 ubiquitin-protein ligase complex which mediates the ubiquitination and subsequent proteasomal degradation of target proteins. Seems to regulate expression levels and/or subnuclear distribution of TOP1, via an unknown mechanism. May play a role in mesenchymal differentiation where it promotes myogenic differentiation and suppresses adipogenesis. In Mus musculus (Mouse), this protein is BTB/POZ domain-containing protein 1 (Btbd1).